The chain runs to 210 residues: RNA binding protein, mRNA processing factor 2 (210 aa).

Over residues 1–10 (MSNLKPDVEH) the composition is skewed to basic and acidic residues. A disordered region spans residues 1–25 (MSNLKPDVEHCTGAGTGTGTGPSGP). S2 is modified (N-acetylserine). Positions 31–108 (RTLFVSGLPV…QTLRLEFAKA (78 aa)) constitute an RRM domain. Positions 41–51 (DIKPRELYLLF) are important for homodimerization.

In terms of assembly, homodimer. Interacts with EEF2.

Its subcellular location is the cytoplasm. The protein localises to the nucleus. The protein resides in the stress granule. In terms of biological role, RNA-binding protein involved in the regulation of smooth muscle cell differentiation and proliferation in the gastrointestinal system. Binds NOG mRNA, the major inhibitor of the bone morphogenetic protein (BMP) pathway. Mediates an increase of NOG mRNA levels, thereby contributing to the negative regulation of BMP signaling pathway and promoting reversible dedifferentiation and proliferation of smooth muscle cells. Acts as a pre-mRNA alternative splicing regulator. Mediates ACTN1 and FLNB alternative splicing. Likely binds to mRNA tandem CAC trinucleotide or CA dinucleotide motifs. The protein is RNA binding protein, mRNA processing factor 2 (Rbpms2) of Rattus norvegicus (Rat).